The chain runs to 313 residues: tRNA dimethylallyltransferase (313 aa).

17 to 24 (GPTASGKT) is an ATP binding site. 19–24 (TASGKT) contributes to the substrate binding site. Interaction with substrate tRNA regions lie at residues 42-45 (DSAL), 166-170 (QRLSR), and 247-252 (RCVGYR).

Belongs to the IPP transferase family. Monomer. Mg(2+) is required as a cofactor.

The enzyme catalyses adenosine(37) in tRNA + dimethylallyl diphosphate = N(6)-dimethylallyladenosine(37) in tRNA + diphosphate. In terms of biological role, catalyzes the transfer of a dimethylallyl group onto the adenine at position 37 in tRNAs that read codons beginning with uridine, leading to the formation of N6-(dimethylallyl)adenosine (i(6)A). The chain is tRNA dimethylallyltransferase from Pectobacterium atrosepticum (strain SCRI 1043 / ATCC BAA-672) (Erwinia carotovora subsp. atroseptica).